The sequence spans 451 residues: Chromosomal replication initiator protein DnaA (451 aa).

The tract at residues 1-72 (MQSIEDIWQE…ANILQEITGR (72 aa)) is domain I, interacts with DnaA modulators. The tract at residues 72–108 (RLFDVRFIDGEQEENFEYTVIKPNPALDEDGVEIGKH) is domain II. Residues 109 to 325 (MLNPRYVFDT…GALIRVVAYS (217 aa)) form a domain III, AAA+ region region. ATP contacts are provided by G153, G155, K156, and T157. The segment at 326–451 (SLVNKDITAG…KNLRKAQNMF (126 aa)) is domain IV, binds dsDNA.

The protein belongs to the DnaA family. In terms of assembly, oligomerizes as a right-handed, spiral filament on DNA at oriC.

It localises to the cytoplasm. Functionally, plays an essential role in the initiation and regulation of chromosomal replication. ATP-DnaA binds to the origin of replication (oriC) to initiate formation of the DNA replication initiation complex once per cell cycle. Binds the DnaA box (a 9 base pair repeat at the origin) and separates the double-stranded (ds)DNA. Forms a right-handed helical filament on oriC DNA; dsDNA binds to the exterior of the filament while single-stranded (ss)DNA is stabiized in the filament's interior. The ATP-DnaA-oriC complex binds and stabilizes one strand of the AT-rich DNA unwinding element (DUE), permitting loading of DNA polymerase. After initiation quickly degrades to an ADP-DnaA complex that is not apt for DNA replication. Binds acidic phospholipids. The chain is Chromosomal replication initiator protein DnaA from Listeria monocytogenes serotype 4b (strain CLIP80459).